Reading from the N-terminus, the 155-residue chain is Alanine- and arginine-rich domain-containing protein (155 aa).

This Homo sapiens (Human) protein is Alanine- and arginine-rich domain-containing protein (AARD).